We begin with the raw amino-acid sequence, 206 residues long: Ribosomal RNA large subunit methyltransferase E (206 aa).

Positions 61, 63, 81, 97, and 122 each coordinate S-adenosyl-L-methionine. Catalysis depends on K162, which acts as the Proton acceptor.

This sequence belongs to the class I-like SAM-binding methyltransferase superfamily. RNA methyltransferase RlmE family.

The protein localises to the cytoplasm. It catalyses the reaction uridine(2552) in 23S rRNA + S-adenosyl-L-methionine = 2'-O-methyluridine(2552) in 23S rRNA + S-adenosyl-L-homocysteine + H(+). Its function is as follows. Specifically methylates the uridine in position 2552 of 23S rRNA at the 2'-O position of the ribose in the fully assembled 50S ribosomal subunit. This is Ribosomal RNA large subunit methyltransferase E from Neisseria gonorrhoeae (strain NCCP11945).